We begin with the raw amino-acid sequence, 266 residues long: Undecaprenyl-diphosphatase 1 (266 aa).

The next 8 helical transmembrane spans lie at 1–21 (MSII…FLPI), 39–59 (QGLA…VIYF), 83–103 (SKLG…GLLL), 113–133 (SAWV…YADA), 141–161 (IYQL…VAMI), 189–209 (FLLA…ELAL), 218–238 (TLLL…YMFL), and 244–264 (MGML…IVFL).

This sequence belongs to the UppP family.

It is found in the cell inner membrane. It carries out the reaction di-trans,octa-cis-undecaprenyl diphosphate + H2O = di-trans,octa-cis-undecaprenyl phosphate + phosphate + H(+). Catalyzes the dephosphorylation of undecaprenyl diphosphate (UPP). Confers resistance to bacitracin. This chain is Undecaprenyl-diphosphatase 1, found in Pseudoalteromonas translucida (strain TAC 125).